Reading from the N-terminus, the 766-residue chain is Subtilisin-like protease SBT3.13 (766 aa).

An N-terminal signal peptide occupies residues 1–21 (MNNSLQSSKLVLLLAIALVLF). Positions 22-120 (LNTELDFLTA…VIPNRIRKLK (99 aa)) are cleaved as a propeptide — activation peptide. One can recognise an Inhibitor I9 domain in the interval 41 to 119 (VYIVYLGERE…HVIPNRIRKL (79 aa)). Residues 134–618 (PTSFSSLSSV…GGLVNPEKAA (485 aa)) enclose the Peptidase S8 domain. Asp-162 acts as the Charge relay system in catalysis. Residues Asn-195 and Asn-223 are each glycosylated (N-linked (GlcNAc...) asparagine). The Charge relay system role is filled by His-239. 2 N-linked (GlcNAc...) asparagine glycosylation sites follow: Asn-254 and Asn-389. Ser-549 functions as the Charge relay system in the catalytic mechanism. Asn-641 carries N-linked (GlcNAc...) asparagine glycosylation.

This sequence belongs to the peptidase S8 family.

Its subcellular location is the secreted. The protein is Subtilisin-like protease SBT3.13 of Arabidopsis thaliana (Mouse-ear cress).